A 35-amino-acid chain; its full sequence is Dolichyl-diphosphooligosaccharide--protein glycosyltransferase subunit 4B (35 aa).

The Lumenal portion of the chain corresponds to 1–8 (MFDDQDLG). Residues 9 to 29 (FFANFLGIFIFIMVIAYHFVV) form a helical membrane-spanning segment. Residues 30 to 35 (AEPKFE) lie on the Cytoplasmic side of the membrane.

This sequence belongs to the OST4 family. Component of the oligosaccharyltransferase (OST) complex.

Its subcellular location is the endoplasmic reticulum membrane. Functionally, subunit of the oligosaccharyl transferase (OST) complex that catalyzes the initial transfer of a defined glycan (Glc(3)Man(9)GlcNAc(2) in eukaryotes) from the lipid carrier dolichol-pyrophosphate to an asparagine residue within an Asn-X-Ser/Thr consensus motif in nascent polypeptide chains, the first step in protein N-glycosylation. N-glycosylation occurs cotranslationally and the complex associates with the Sec61 complex at the channel-forming translocon complex that mediates protein translocation across the endoplasmic reticulum (ER). All subunits are required for a maximal enzyme activity. The polypeptide is Dolichyl-diphosphooligosaccharide--protein glycosyltransferase subunit 4B (OST4B) (Arabidopsis thaliana (Mouse-ear cress)).